Reading from the N-terminus, the 177-residue chain is uncharacterized protein (177 aa).

This is an uncharacterized protein from Acanthamoeba polyphaga mimivirus (APMV).